Here is a 467-residue protein sequence, read N- to C-terminus: Argininosuccinate lyase (467 aa).

Belongs to the lyase 1 family. Argininosuccinate lyase subfamily.

It localises to the cytoplasm. The catalysed reaction is 2-(N(omega)-L-arginino)succinate = fumarate + L-arginine. It participates in amino-acid biosynthesis; L-arginine biosynthesis; L-arginine from L-ornithine and carbamoyl phosphate: step 3/3. This chain is Argininosuccinate lyase, found in Rhizobium etli (strain CIAT 652).